An 84-amino-acid chain; its full sequence is Anthracycline acyl carrier protein DpsG (84 aa).

A Carrier domain is found at 3–80; the sequence is ELSLAELREI…SMLIFVNERL (78 aa). Serine 40 carries the O-(pantetheine 4'-phosphoryl)serine modification.

It participates in antibiotic biosynthesis; daunorubicin biosynthesis. It functions in the pathway antibiotic biosynthesis; carminomycin biosynthesis. The protein operates within antibiotic biosynthesis; rhodomycin biosynthesis. Its pathway is antibiotic biosynthesis; aclacinomycin biosynthesis. Functionally, involved in the biosynthesis of aklanonate which is an important precursor common to the formation of the clinically significant anthracyclines such as carminomycin, daunorubicin (daunomycin), rhodomycin, aclacinomycin T (aklavin) and aclacinomycin A (aclarubicin). These compounds are aromatic polyketide antibiotics that exhibit high cytotoxicity and are widely applied in the chemotherapy of a variety of cancers. The polypeptide is Anthracycline acyl carrier protein DpsG (dpsG) (Streptomyces peucetius).